Consider the following 202-residue polypeptide: Peptide methionine sulfoxide reductase B2, chloroplastic (202 aa).

A chloroplast-targeting transit peptide spans 1–63; that stretch reads MAFNIITPGR…RRGFHGGRIV (63 aa). Residues 77–198 enclose the MsrB domain; it reads EEEWRAILSP…NSISLKFTPE (122 aa). Positions 116, 119, 162, and 165 each coordinate Zn(2+). Cysteine 134 and cysteine 187 are oxidised to a cystine. Residue cysteine 187 is the Nucleophile of the active site.

This sequence belongs to the MsrB Met sulfoxide reductase family. Requires Zn(2+) as cofactor. As to expression, expressed in stems, young leaves, floral buds and flowers. Expressed at low levels in roots, mature leaves and siliques (at protein level).

It localises to the plastid. It is found in the chloroplast. It catalyses the reaction L-methionyl-[protein] + [thioredoxin]-disulfide + H2O = L-methionyl-(R)-S-oxide-[protein] + [thioredoxin]-dithiol. Its function is as follows. Catalyzes the reduction of methionine sulfoxide (MetSO) to methionine in proteins. Specifically reduces the MetSO R-enantiomer. Plays a protective role against oxidative stress by restoring activity to proteins that have been inactivated by methionine oxidation. May play an essential function in association with MSRB1 in maintaining vegetative growth during environmental constraints, through the preservation of photosynthetic antennae. MSRB1 and MSRB2 account for most of the leaf peptide MSR capacity. The protein is Peptide methionine sulfoxide reductase B2, chloroplastic of Arabidopsis thaliana (Mouse-ear cress).